We begin with the raw amino-acid sequence, 92 residues long: Small ribosomal subunit protein bS21 (92 aa).

The tract at residues Gln-37 to Arg-92 is disordered. Residues Tyr-51–Arg-67 show a composition bias toward basic and acidic residues. Positions Arg-68–Ala-77 are enriched in basic residues.

It belongs to the bacterial ribosomal protein bS21 family.

The protein is Small ribosomal subunit protein bS21 of Maricaulis maris (strain MCS10) (Caulobacter maris).